The primary structure comprises 277 residues: Small ribosomal subunit protein uS2 (277 aa).

Positions 226 to 277 are disordered; it reads GQQARADRGEDLGAAVEPVAEPALVEEAAAPVTEDEQVPAEAAAETERQSDA. A compositionally biased stretch (low complexity) spans 239-257; it reads AAVEPVAEPALVEEAAAPV.

It belongs to the universal ribosomal protein uS2 family.

This chain is Small ribosomal subunit protein uS2, found in Sphingopyxis alaskensis (strain DSM 13593 / LMG 18877 / RB2256) (Sphingomonas alaskensis).